Consider the following 1180-residue polypeptide: Phosphatidylinositol 4-kinase (1180 aa).

One can recognise a PIK helical domain in the interval 1-206 (MNKISDTIII…SVYLHSPSTS (206 aa)). Disordered regions lie at residues 15–84 (NEDE…KHKE), 257–327 (ENDH…ENDN), 355–391 (TSPI…NNIN), 768–799 (TISN…IPHS), and 832–894 (AISP…SPFG). Low complexity predominate over residues 38–74 (NNNNNNILTNVNNNKNNTITSSGGSDSSSSSSNNNNN). Basic residues predominate over residues 75–84 (KIKKSKKHKE). Basic and acidic residues predominate over residues 257–270 (ENDHHIENDPKKDI). Composition is skewed to low complexity over residues 271–325 (NSNN…SGEN), 364–391 (NNNN…NNIN), 768–793 (TISN…PTLP), and 835–879 (PPSQ…SPTN). Residues 895–1164 (ESWQEKIERY…LISYSIDHFK (270 aa)) form the PI3K/PI4K catalytic domain. The tract at residues 901–907 (IERYKKI) is G-loop. The catalytic loop stretch occupies residues 1030–1038 (QIKDRHNGN). The interval 1049-1073 (HIDFGFILSNSPGNISFESAPFKLT) is activation loop.

It belongs to the PI3/PI4-kinase family. Type III PI4K subfamily.

The catalysed reaction is a 1,2-diacyl-sn-glycero-3-phospho-(1D-myo-inositol) + ATP = a 1,2-diacyl-sn-glycero-3-phospho-(1D-myo-inositol 4-phosphate) + ADP + H(+). Acts on phosphatidylinositol (PtdIns) in the first committed step in the production of the second messenger inositol-1,4,5,-trisphosphate. The polypeptide is Phosphatidylinositol 4-kinase (pikD) (Dictyostelium discoideum (Social amoeba)).